Reading from the N-terminus, the 490-residue chain is Sushi domain-containing protein 4 (490 aa).

Residues 1-20 (MYHGMNPSNGDGFLEQQLQQ) are disordered. The first 41 residues, 1–41 (MYHGMNPSNGDGFLEQQLQQQQPQSPQRLLAVILWFQLALC), serve as a signal peptide directing secretion. Topologically, residues 42–319 (FGPAQLTGGF…PSTHETLLTT (278 aa)) are extracellular. Sushi domains lie at 55–119 (NVCA…VCIQ), 120–179 (EDCR…ICQG), 178–239 (QGCL…RCLA), and 241–304 (EVCP…YCIK). 8 disulfide bridges follow: Cys-57-Cys-99, Cys-85-Cys-117, Cys-122-Cys-165, Cys-147-Cys-177, Cys-180-Cys-224, Cys-210-Cys-237, Cys-243-Cys-289, and Cys-274-Cys-302. N-linked (GlcNAc...) asparagine glycosylation is found at Asn-104 and Asn-134. Asn-192 carries an N-linked (GlcNAc...) asparagine glycan. Residues 320 to 340 (WKIVAFTATSVLLVLLLVILA) form a helical membrane-spanning segment. Residues 341–490 (RMFQTKFKAH…DEIPLMEEDP (150 aa)) lie on the Cytoplasmic side of the membrane. A disordered region spans residues 394–490 (YPASVGQGCP…DEIPLMEEDP (97 aa)). Polar residues-rich tracts occupy residues 430 to 444 (CDSTSGSSEMLQSLY) and 461 to 475 (DTISSTAGEVASTSP). Residues 479 to 490 (IADEIPLMEEDP) are compositionally biased toward acidic residues.

As to expression, high expression in brain and eye, with weaker expression in spinal cord and testis. Detected in white matter of brain and in the outer segments of photoreceptors.

The protein localises to the membrane. Its function is as follows. Acts as a complement inhibitor by disrupting the formation of the classical C3 convertase. Isoform 3 inhibits the classical complement pathway, while membrane-bound isoform 1 inhibits deposition of C3b via both the classical and alternative complement pathways. In Mus musculus (Mouse), this protein is Sushi domain-containing protein 4 (Susd4).